The primary structure comprises 661 residues: MADSISGTPLLTQPERLERRLKDIPAEPGCYLMRDGDDRILYVGKSKTLRSRVRSYFRSRHDLSPRIRLMTRQVCEIEFIVTDSEAEALALESNLIKNHQPHFNVLLKDDKKYPYLCITWSESYPRIFITRRRRFRSPLDRFYGPYVDVGLLRRTLFLVKRVFPLRQRPRPLHQDRTCLNYSIGRCPGVCQEKISSDDYHQTLRKVAMVFQGRSDELQNLLQEQMHKYADRTDYESAARVRDQLQGLDQLTADQKMSLPDSSVSRDVLALACDERLAAVQLFQMRAGKLVGRLGYTADAAGLSPGLILQRVIEEHYSQVDAVEVPPQLLVQHPLPQQSLLEEWLTEQRERKVQIHCPQRRQKADLIELVQRNAEFELLRAKQGQEQQALSTEDLAQLLDLPLPPRRIEGYDISHIQGSDAVASQVVFIDGLPAKQHYRKYKIQSSSIRAGHSDDFMAMAEIMRRRFRRWARAKADGLDLGALRQKGGSALQTDGLNDWPDLVMIDGGKGQLSAVMEALRELNLHDDLNVCSLAKQREEVFLPGESQPLESEADQLGVALLRRLRDEAHRFAVSFHRQQRGERMKRSRLSDIPGLGAKRVRDLLSHFHSIDAIQLASVDTLSKAPGVGPVLAQDIFNFFHPTDENDGLPSSQLEGEQLEHSA.

The GIY-YIG domain occupies 26-105; it reads AEPGCYLMRD…IKNHQPHFNV (80 aa). Residues 215 to 250 enclose the UVR domain; sequence DELQNLLQEQMHKYADRTDYESAARVRDQLQGLDQL.

This sequence belongs to the UvrC family. As to quaternary structure, interacts with UvrB in an incision complex.

Its subcellular location is the cytoplasm. Functionally, the UvrABC repair system catalyzes the recognition and processing of DNA lesions. UvrC both incises the 5' and 3' sides of the lesion. The N-terminal half is responsible for the 3' incision and the C-terminal half is responsible for the 5' incision. This chain is UvrABC system protein C, found in Synechococcus sp. (strain CC9902).